The following is a 482-amino-acid chain: Interferon-induced protein with tetratricopeptide repeats 5 (482 aa).

TPR repeat units follow at residues 51–84 (LALY…IQQE), 94–127 (LVTW…CKKL), 138–173 (PETD…EPDN), 181–214 (AITV…NPDN), 249–282 (PYVL…TPTS), 338–371 (AFAY…ENIT), 376–410 (HQIH…KDRS), and 435–468 (VQSL…DPEN). An interaction with the 5'-triphosphate group of PPP-RNA region spans residues 254-260 (YAAKFYR).

Belongs to the IFIT family. As to quaternary structure, monomer. Interacts with MAP3K7 and the components of the IKK core complex CHUK, IKBKB and IKBKG; the interaction synergizes the recruitment of IKK to MAP3K7 and enhances IKK phosphorylation.

It localises to the cell projection. Its subcellular location is the ruffle membrane. In terms of biological role, interferon-induced RNA-binding protein involved in the human innate immune response. Has a broad and adaptable RNA structure recognition important for RNA recognition specificity in antiviral defense. Binds precursor and processed tRNAs as well as poly-U-tailed tRNA fragments. Specifically binds single-stranded RNA bearing a 5'-triphosphate group (PPP-RNA), thereby acting as a sensor of viral single-stranded RNAs. Single-stranded PPP-RNAs, which lack 2'-O-methylation of the 5' cap and bear a 5'-triphosphate group instead, are specific from viruses, providing a molecular signature to distinguish between self and non-self mRNAs by the host during viral infection. Directly binds PPP-RNA in a non-sequence-specific manner. Also recognizes and selectively binds AT-rich dsDNA. Additionally, as a mediator in innate immunity, positively regulates IKK-NFKB signaling by sinergizing the recruitment of IKK to MAP3K7. In Homo sapiens (Human), this protein is Interferon-induced protein with tetratricopeptide repeats 5 (IFIT5).